The chain runs to 442 residues: F-box/FBD/LRR-repeat protein At3g14710 (442 aa).

An F-box domain is found at 26 to 73; that stretch reads DKFSSLLESVVSIILSQLPTAEAVSTSVLSKSWKNIWTNITDLHFDDT. 3 LRR repeats span residues 126-147, 151-172, and 173-194; these read NLQR…SLFP, SLVE…AILP, and NLKF…SKNL. In terms of domain architecture, FBD spans 370–414; the sequence is VESPDCVTTMLKVLQIRNFKPNRLQISVLRYVLDNAEILGSVILS.

This chain is F-box/FBD/LRR-repeat protein At3g14710, found in Arabidopsis thaliana (Mouse-ear cress).